A 729-amino-acid polypeptide reads, in one-letter code: U-box domain-containing protein 17 (729 aa).

In terms of domain architecture, U-box spans 304–378 (TVPKDFVCPI…VQWCTASGIS (75 aa)). ARM repeat units lie at residues 438 to 477 (KENR…NLSI), 479 to 520 (EKNK…SLSA), 523 to 562 (EYKK…NLST), and 564 to 601 (PDNC…LLVR).

It carries out the reaction S-ubiquitinyl-[E2 ubiquitin-conjugating enzyme]-L-cysteine + [acceptor protein]-L-lysine = [E2 ubiquitin-conjugating enzyme]-L-cysteine + N(6)-ubiquitinyl-[acceptor protein]-L-lysine.. The protein operates within protein modification; protein ubiquitination. In terms of biological role, functions as an E3 ubiquitin ligase. The chain is U-box domain-containing protein 17 (PUB17) from Arabidopsis thaliana (Mouse-ear cress).